Consider the following 241-residue polypeptide: Small ribosomal subunit protein uS10m (241 aa).

The N-terminal 54 residues, 1-54 (MIAGVLRRSSLPSRQTLSAALASFNSCISHNLTPATTGASVSSRFTLASSPNSF), are a transit peptide targeting the mitochondrion.

This sequence belongs to the universal ribosomal protein uS10 family. Component of the mitochondrial ribosome small subunit.

It localises to the mitochondrion. The chain is Small ribosomal subunit protein uS10m (RPS10) from Arabidopsis thaliana (Mouse-ear cress).